A 55-amino-acid chain; its full sequence is MSAYTVSRLALDAGVSVHIVRDYLLRGLLRPVACTPGGYGLFDDAALQRLCFVRA.

Positions Ala-3 to Ala-55 constitute an HTH merR-type domain. Residues Val-6–Leu-25 constitute a DNA-binding region (H-T-H motif).

The protein is HTH-type transcriptional regulator MerD (merD) of Pseudomonas fluorescens.